The sequence spans 344 residues: UPF0283 membrane protein YcjF (344 aa).

A run of 3 helical transmembrane segments spans residues 70 to 90 (MVMG…VQWT), 100 to 120 (VALG…GSVV), and 213 to 233 (ESTL…FIAW).

The protein belongs to the UPF0283 family.

The protein localises to the cell inner membrane. This is UPF0283 membrane protein YcjF from Shigella dysenteriae serotype 1 (strain Sd197).